The following is a 215-amino-acid chain: MOB kinase activator-like 1B (215 aa).

Residues 1–25 (MSLFGLGRNQKTFRPKKSAPSGTKG) are disordered. Zn(2+) is bound by residues cysteine 79, cysteine 84, histidine 161, and histidine 166.

The protein belongs to the MOB1/phocein family. In terms of assembly, interacts with SIK1. Expression is detected along the vasculature in cotyledons, hypocotyls and roots of 3- to 4-day-old seedlings.

The sequence is that of MOB kinase activator-like 1B from Arabidopsis thaliana (Mouse-ear cress).